The chain runs to 255 residues: PHD finger protein ALFIN-LIKE 4 (255 aa).

At M1 the chain carries N-acetylmethionine. The interval 145-200 is disordered; that stretch reads GKDKSSVSNNSSNRSKSSSKRGSESRAKFSKPEPKDDEEEEEEGVEEEDEDEQGET. Residues 150–160 are compositionally biased toward low complexity; the sequence is SVSNNSSNRSK. Residues 165 to 178 are compositionally biased toward basic and acidic residues; sequence RGSESRAKFSKPEP. Over residues 179 to 198 the composition is skewed to acidic residues; that stretch reads KDDEEEEEEGVEEEDEDEQG. The PHD-type zinc-finger motif lies at 199 to 251; sequence ETQCGACGESYAADEFWICCDLCEMWFHGKCVKITPARAEHIKQYKCPSCSNK.

This sequence belongs to the Alfin family. Interacts with H3K4me3 and to a lesser extent with H3K4me2. As to expression, ubiquitously expressed.

Its subcellular location is the nucleus. Functionally, histone-binding component that specifically recognizes H3 tails trimethylated on 'Lys-4' (H3K4me3), which mark transcription start sites of virtually all active genes. The sequence is that of PHD finger protein ALFIN-LIKE 4 (AL4) from Arabidopsis thaliana (Mouse-ear cress).